We begin with the raw amino-acid sequence, 204 residues long: LexA repressor (204 aa).

The H-T-H motif DNA-binding region spans Val-28–Asp-48. Catalysis depends on for autocatalytic cleavage activity residues Ser-126 and Lys-164.

This sequence belongs to the peptidase S24 family. In terms of assembly, homodimer.

The enzyme catalyses Hydrolysis of Ala-|-Gly bond in repressor LexA.. Represses a number of genes involved in the response to DNA damage (SOS response), including recA and lexA. In the presence of single-stranded DNA, RecA interacts with LexA causing an autocatalytic cleavage which disrupts the DNA-binding part of LexA, leading to derepression of the SOS regulon and eventually DNA repair. This is LexA repressor from Exiguobacterium sibiricum (strain DSM 17290 / CCUG 55495 / CIP 109462 / JCM 13490 / 255-15).